The primary structure comprises 337 residues: MDLDQIVADAQQSFEQAADITTLENEKARFLGKSGALTELLKGLGKLDPEARKTEGARINVAKQQVEAALTARRQALADALLNQRLTAEAIDVTLPGRGAGAGSLHPVMRTWERVEQIFGSIGFDVADGPEIETDWYNFTSLNSPENHPARSMQDTFYVEGKDADGRQLLLRTHTSPMQVRYARMNRPPIKVIAPGRTYRVDSDATHSPMFNQVEGLWIDENISFADLKGVYTDFLKKFFERDDILVRFRPSYFPFTEPSAEIDMMFEQGKNAGKWLEISGSGQVHPTVIRNMGLDPERYIGFAFGSGLERLTMLRYGVQDLRLFFENDLRFLRQFA.

E258 is a binding site for Mg(2+).

This sequence belongs to the class-II aminoacyl-tRNA synthetase family. Phe-tRNA synthetase alpha subunit type 1 subfamily. Tetramer of two alpha and two beta subunits. Mg(2+) is required as a cofactor.

Its subcellular location is the cytoplasm. The catalysed reaction is tRNA(Phe) + L-phenylalanine + ATP = L-phenylalanyl-tRNA(Phe) + AMP + diphosphate + H(+). This chain is Phenylalanine--tRNA ligase alpha subunit, found in Burkholderia cenocepacia (strain ATCC BAA-245 / DSM 16553 / LMG 16656 / NCTC 13227 / J2315 / CF5610) (Burkholderia cepacia (strain J2315)).